Reading from the N-terminus, the 139-residue chain is Small ribosomal subunit protein uS12m (139 aa).

Residues 1 to 29 constitute a mitochondrion transit peptide; sequence MSWPGLLYGLTTSLSRGLALAPQLWAARS.

It belongs to the universal ribosomal protein uS12 family. In terms of assembly, component of the mitochondrial ribosome small subunit (28S) which comprises a 12S rRNA and about 30 distinct proteins.

The protein localises to the mitochondrion. This Mus musculus (Mouse) protein is Small ribosomal subunit protein uS12m (Mrps12).